The following is a 335-amino-acid chain: 1D-myo-inositol 2-acetamido-2-deoxy-alpha-D-glucopyranoside deacetylase (335 aa).

Residues histidine 19, aspartate 22, and histidine 158 each coordinate Zn(2+).

This sequence belongs to the MshB deacetylase family. Zn(2+) serves as cofactor.

It carries out the reaction 1D-myo-inositol 2-acetamido-2-deoxy-alpha-D-glucopyranoside + H2O = 1D-myo-inositol 2-amino-2-deoxy-alpha-D-glucopyranoside + acetate. Functionally, catalyzes the deacetylation of 1D-myo-inositol 2-acetamido-2-deoxy-alpha-D-glucopyranoside (GlcNAc-Ins) in the mycothiol biosynthesis pathway. The sequence is that of 1D-myo-inositol 2-acetamido-2-deoxy-alpha-D-glucopyranoside deacetylase from Corynebacterium urealyticum (strain ATCC 43042 / DSM 7109).